The following is a 251-amino-acid chain: Ditrans,polycis-undecaprenyl-diphosphate synthase ((2E,6E)-farnesyl-diphosphate specific) (251 aa).

Aspartate 21 is an active-site residue. Aspartate 21 is a binding site for Mg(2+). Substrate-binding positions include 22-25 (GNNR), tryptophan 26, histidine 38, and 66-68 (SSE). Asparagine 69 functions as the Proton acceptor in the catalytic mechanism. Residues tryptophan 70, arginine 72, arginine 189, and 195–197 (RIS) each bind substrate. Glutamate 208 lines the Mg(2+) pocket.

Belongs to the UPP synthase family. In terms of assembly, homodimer. Requires Mg(2+) as cofactor.

It carries out the reaction 8 isopentenyl diphosphate + (2E,6E)-farnesyl diphosphate = di-trans,octa-cis-undecaprenyl diphosphate + 8 diphosphate. In terms of biological role, catalyzes the sequential condensation of isopentenyl diphosphate (IPP) with (2E,6E)-farnesyl diphosphate (E,E-FPP) to yield (2Z,6Z,10Z,14Z,18Z,22Z,26Z,30Z,34E,38E)-undecaprenyl diphosphate (di-trans,octa-cis-UPP). UPP is the precursor of glycosyl carrier lipid in the biosynthesis of bacterial cell wall polysaccharide components such as peptidoglycan and lipopolysaccharide. The chain is Ditrans,polycis-undecaprenyl-diphosphate synthase ((2E,6E)-farnesyl-diphosphate specific) from Pseudomonas putida (strain ATCC 47054 / DSM 6125 / CFBP 8728 / NCIMB 11950 / KT2440).